We begin with the raw amino-acid sequence, 194 residues long: Adapter protein MecA 2 (194 aa).

This sequence belongs to the MecA family. In terms of assembly, homodimer.

In terms of biological role, enables the recognition and targeting of unfolded and aggregated proteins to the ClpC protease or to other proteins involved in proteolysis. Also involved in Spx degradation by ClpC. Acts negatively in the development of competence by binding ComK and recruiting it to the ClpCP protease. When overexpressed, inhibits sporulation. This is Adapter protein MecA 2 (mecB) from Bacillus subtilis (strain 168).